The following is a 591-amino-acid chain: 4-coumarate--CoA ligase-like 3 (591 aa).

6 residues coordinate ATP: Ser-228, Ser-229, Gly-230, Thr-231, Ser-232, and Lys-236. Tyr-280 provides a ligand contact to (E)-4-coumaroyl-AMP. Arg-301 contributes to the CoA binding site. The tract at residues 303-375 (DAGDAVAAIG…QAFPHVDFIQ (73 aa)) is SBD1. (E)-4-coumaroyl-AMP contacts are provided by Ala-353, Gln-375, Gly-376, and Thr-380. ATP-binding residues include Gln-375, Gly-376, Thr-380, Asp-459, and Arg-474. Positions 376–440 (GYGMTESTAV…LHGPGIMKGY (65 aa)) are SBD2. The (E)-4-coumaroyl-AMP site is built by Lys-476 and Lys-480. CoA is bound by residues Lys-482 and Gly-483. Residue Lys-565 coordinates ATP.

This sequence belongs to the ATP-dependent AMP-binding enzyme family. Requires Mg(2+) as cofactor.

It catalyses the reaction (E)-4-coumarate + ATP + CoA = (E)-4-coumaroyl-CoA + AMP + diphosphate. The enzyme catalyses (E)-4-coumarate + ATP + H(+) = (E)-4-coumaroyl-AMP + diphosphate. It carries out the reaction (E)-4-coumaroyl-AMP + CoA = (E)-4-coumaroyl-CoA + AMP + H(+). Its function is as follows. Carboxylate--CoA ligase that may use 4-coumarate as substrate. Follows a two-step reaction mechanism, wherein the carboxylate substrate first undergoes adenylation by ATP, followed by a thioesterification in the presence of CoA to yield the final CoA thioester. This is 4-coumarate--CoA ligase-like 3 (4CLL3) from Oryza sativa subsp. japonica (Rice).